A 468-amino-acid chain; its full sequence is Glutamine synthetase (468 aa).

Residues 13-97 (NEVKFVDLRF…IRCDILEPAT (85 aa)) enclose the GS beta-grasp domain. A GS catalytic domain is found at 105–468 (PRSIAKRAED…PVEFELYYSV (364 aa)). 2 residues coordinate Mg(2+): E130 and E132. An ATP-binding site is contributed by E208. E213 and E220 together coordinate Mg(2+). Residues 264-265 (NG) and G265 contribute to the L-glutamate site. H269 contacts Mg(2+). Residues 271–273 (HQS) and S273 contribute to the ATP site. L-glutamate is bound by residues R321, E327, and R339. The ATP site is built by R339, R344, and K352. Residue E357 coordinates Mg(2+). R359 lines the L-glutamate pocket. The residue at position 397 (Y397) is an O-AMP-tyrosine.

It belongs to the glutamine synthetase family. As to quaternary structure, oligomer of 12 subunits arranged in the form of two hexameric ring. It depends on Mg(2+) as a cofactor.

The protein localises to the cytoplasm. It carries out the reaction L-glutamate + NH4(+) + ATP = L-glutamine + ADP + phosphate + H(+). With respect to regulation, the activity of this enzyme could be controlled by adenylation under conditions of abundant glutamine. Catalyzes the ATP-dependent biosynthesis of glutamine from glutamate and ammonia. This Vibrio alginolyticus protein is Glutamine synthetase.